Reading from the N-terminus, the 597-residue chain is Golgin subfamily A member 8C (597 aa).

Disordered stretches follow at residues 1–80 (MAEE…VPDS) and 96–120 (KQQK…QKAE). A compositionally biased stretch (polar residues) spans 38–50 (TNGSIHETATSGG). Positions 53–70 (SPGDSSSTSSSLHAPQSP) are enriched in low complexity. Coiled coils occupy residues 81 to 141 (RSVK…NTDL), 199 to 255 (EWKL…SQEV), and 296 to 394 (SEVE…GKRL). The span at 100–120 (KQVEHQLEEEKKANNEKQKAE) shows a compositional bias: basic and acidic residues. 3 disordered regions span residues 390–422 (LGKR…SGFM), 457–498 (PITK…GVAA), and 549–576 (PVQG…QEHP). The span at 470 to 483 (PGGGHHQAGPGQGG) shows a compositional bias: gly residues. The span at 553–563 (ETREGSPHDKP) shows a compositional bias: basic and acidic residues.

Belongs to the GOLGA8 family.

This chain is Golgin subfamily A member 8C (GOLGA8CP), found in Homo sapiens (Human).